Here is a 454-residue protein sequence, read N- to C-terminus: Bifunctional protein GlmU (454 aa).

The interval 1–232 is pyrophosphorylase; it reads MTDRTCLSIV…VDNVIGINNR (232 aa). UDP-N-acetyl-alpha-D-glucosamine contacts are provided by residues 11–14, K25, Q78, and 83–84; these read LAAG and GT. A Mg(2+)-binding site is contributed by D108. UDP-N-acetyl-alpha-D-glucosamine contacts are provided by G144, E158, N173, and N230. Residue N230 participates in Mg(2+) binding. Residues 233-253 form a linker region; it reads AELAEAETIWQNRKRRELMLS. An N-acetyltransferase region spans residues 254–454; the sequence is GVTLIAPETV…AIKAAKSVSK (201 aa). UDP-N-acetyl-alpha-D-glucosamine-binding residues include R319 and K337. H349 acts as the Proton acceptor in catalysis. 2 residues coordinate UDP-N-acetyl-alpha-D-glucosamine: Y352 and N363. Residues A366, 372–373, S391, S409, and R426 contribute to the acetyl-CoA site; that span reads NY.

In the N-terminal section; belongs to the N-acetylglucosamine-1-phosphate uridyltransferase family. It in the C-terminal section; belongs to the transferase hexapeptide repeat family. As to quaternary structure, homotrimer. Mg(2+) is required as a cofactor.

The protein localises to the cytoplasm. The catalysed reaction is alpha-D-glucosamine 1-phosphate + acetyl-CoA = N-acetyl-alpha-D-glucosamine 1-phosphate + CoA + H(+). It catalyses the reaction N-acetyl-alpha-D-glucosamine 1-phosphate + UTP + H(+) = UDP-N-acetyl-alpha-D-glucosamine + diphosphate. Its pathway is nucleotide-sugar biosynthesis; UDP-N-acetyl-alpha-D-glucosamine biosynthesis; N-acetyl-alpha-D-glucosamine 1-phosphate from alpha-D-glucosamine 6-phosphate (route II): step 2/2. It participates in nucleotide-sugar biosynthesis; UDP-N-acetyl-alpha-D-glucosamine biosynthesis; UDP-N-acetyl-alpha-D-glucosamine from N-acetyl-alpha-D-glucosamine 1-phosphate: step 1/1. It functions in the pathway bacterial outer membrane biogenesis; LPS lipid A biosynthesis. Catalyzes the last two sequential reactions in the de novo biosynthetic pathway for UDP-N-acetylglucosamine (UDP-GlcNAc). The C-terminal domain catalyzes the transfer of acetyl group from acetyl coenzyme A to glucosamine-1-phosphate (GlcN-1-P) to produce N-acetylglucosamine-1-phosphate (GlcNAc-1-P), which is converted into UDP-GlcNAc by the transfer of uridine 5-monophosphate (from uridine 5-triphosphate), a reaction catalyzed by the N-terminal domain. This is Bifunctional protein GlmU from Brucella abortus (strain S19).